We begin with the raw amino-acid sequence, 118 residues long: Secreted effector CSEP0064 (118 aa).

A signal peptide spans 1 to 21 (MRPFQLLSALAIFINLEAVEA). A disulfide bridge connects residues C27 and C113.

As to quaternary structure, interacts in planta with the pathogenesis-related protein PR10.

The protein localises to the secreted. Its subcellular location is the host cell. Functionally, secreted effector that increases susceptibility to infection in both monocotyledonous and dicotyledonous plants. Non-catalytic homolog of fungal RNases that binds host RNA and inhibits the degradation of host ribosomal RNA induced by ribosome-inactivating proteins (RIPs), preventing host cell death, an inviable interaction and demise of the fungus. The chain is Secreted effector CSEP0064 from Blumeria graminis f. sp. hordei (strain DH14) (Barley powdery mildew).